A 350-amino-acid polypeptide reads, in one-letter code: 3-isopropylmalate dehydrogenase (350 aa).

71–84 (GPKWADAPRHLRPE) contributes to the NAD(+) binding site. 4 residues coordinate substrate: R91, R101, R129, and D220. D220, D244, and D248 together coordinate Mg(2+). 279 to 291 (GSAPDIAGKGLAN) lines the NAD(+) pocket.

It belongs to the isocitrate and isopropylmalate dehydrogenases family. LeuB type 1 subfamily. As to quaternary structure, homodimer. The cofactor is Mg(2+). Mn(2+) is required as a cofactor.

It is found in the cytoplasm. It carries out the reaction (2R,3S)-3-isopropylmalate + NAD(+) = 4-methyl-2-oxopentanoate + CO2 + NADH. Its pathway is amino-acid biosynthesis; L-leucine biosynthesis; L-leucine from 3-methyl-2-oxobutanoate: step 3/4. In terms of biological role, catalyzes the oxidation of 3-carboxy-2-hydroxy-4-methylpentanoate (3-isopropylmalate) to 3-carboxy-4-methyl-2-oxopentanoate. The product decarboxylates to 4-methyl-2 oxopentanoate. The chain is 3-isopropylmalate dehydrogenase from Caulobacter vibrioides (strain ATCC 19089 / CIP 103742 / CB 15) (Caulobacter crescentus).